Here is a 182-residue protein sequence, read N- to C-terminus: Crossover junction endodeoxyribonuclease RuvC (182 aa).

Catalysis depends on residues aspartate 7, glutamate 69, and aspartate 141. Aspartate 7, glutamate 69, and aspartate 141 together coordinate Mg(2+).

This sequence belongs to the RuvC family. Homodimer which binds Holliday junction (HJ) DNA. The HJ becomes 2-fold symmetrical on binding to RuvC with unstacked arms; it has a different conformation from HJ DNA in complex with RuvA. In the full resolvosome a probable DNA-RuvA(4)-RuvB(12)-RuvC(2) complex forms which resolves the HJ. Mg(2+) is required as a cofactor.

It is found in the cytoplasm. It catalyses the reaction Endonucleolytic cleavage at a junction such as a reciprocal single-stranded crossover between two homologous DNA duplexes (Holliday junction).. Functionally, the RuvA-RuvB-RuvC complex processes Holliday junction (HJ) DNA during genetic recombination and DNA repair. Endonuclease that resolves HJ intermediates. Cleaves cruciform DNA by making single-stranded nicks across the HJ at symmetrical positions within the homologous arms, yielding a 5'-phosphate and a 3'-hydroxyl group; requires a central core of homology in the junction. The consensus cleavage sequence is 5'-(A/T)TT(C/G)-3'. Cleavage occurs on the 3'-side of the TT dinucleotide at the point of strand exchange. HJ branch migration catalyzed by RuvA-RuvB allows RuvC to scan DNA until it finds its consensus sequence, where it cleaves and resolves the cruciform DNA. The polypeptide is Crossover junction endodeoxyribonuclease RuvC (Variovorax paradoxus (strain S110)).